A 388-amino-acid chain; its full sequence is Gastricsin (388 aa).

The N-terminal stretch at 1–16 is a signal peptide; sequence MKWMVVVLVCLQLLEA. A propeptide spans 17–59 (activation peptide); the sequence is AVVKVPLKKFKSIRETMKEKGLLGEFLRTHKYDPAWKYRFGDL. In terms of domain architecture, Peptidase A1 spans 73 to 385; that stretch reads YFGEISIGTP…DLGNNRVGFA (313 aa). Residue D91 is part of the active site. Intrachain disulfides connect C104–C109 and C267–C271. The active site involves D276. The cysteines at positions 310 and 343 are disulfide-linked.

The protein belongs to the peptidase A1 family.

It is found in the secreted. The enzyme catalyses More restricted specificity than pepsin A, but shows preferential cleavage at Tyr-|-Xaa bonds. High activity on hemoglobin.. Hydrolyzes a variety of proteins. This Homo sapiens (Human) protein is Gastricsin (PGC).